Reading from the N-terminus, the 500-residue chain is Cytochrome P450 CYP736A12 (500 aa).

The helical transmembrane segment at 4–24 (LAYPLLFVLLGALSWWILPII) threads the bilayer. Heme is bound at residue Cys-442.

Belongs to the cytochrome P450 family. Heme serves as cofactor.

It is found in the membrane. Its function is as follows. Probable heme-thiolate monooxygenase. This is Cytochrome P450 CYP736A12 from Panax ginseng (Korean ginseng).